The chain runs to 561 residues: MAKIVEFDDKSRRSLERGINTLADAVRITMGPKGRNVLLEKKYGAPQIVNDGITVAKDIELEDPLENTGAKLIQEVASKTKDIAGDGTTTATVLAQSMIKEGLKNVAAGANPVAVRRGIEKTVSLLVKEIQTVAKPVEGEAIAQVATVSAGGDAEVGRMISEAMDKVTKDGVITVEESKSLSTDLEVVEGMQIDRGYLSPYFVTDQERLVVDFENARILITDKKISSIQDLVPVLEKVARAGQSLLIIAEDIEGEALATLVVNKARGVLNVAAVKAPGFGDRRKAMLQDIAILTGGQLISEEVGLSLEMVDLDMMGIGRKISINKDNTTIVADGGTAEEVKKRIAQIRKQLGESDSDYDKEKLQERIAKLAGGVAVIKVGAATETELKDRKLRIEDALNATKAAVEEGIVPGGGTTLIHLSTKVEELKGSLNNEEEKIGADIVRRALEAPLNQIANNSGVEGSVIVEKVRSTDFSVGYNVITGEYEDLIAAGILDPAMVVRSALQNAGSIAGMVLTTEAVVVEKPEKKGAAPDMDGGMGGMGGMGGMGGMGGMGMPGMGMM.

ATP contacts are provided by residues threonine 29–proline 32, aspartate 86–threonine 90, glycine 413, and aspartate 495.

It belongs to the chaperonin (HSP60) family. Forms a cylinder of 14 subunits composed of two heptameric rings stacked back-to-back. Interacts with the co-chaperonin GroES.

Its subcellular location is the cytoplasm. It catalyses the reaction ATP + H2O + a folded polypeptide = ADP + phosphate + an unfolded polypeptide.. Functionally, together with its co-chaperonin GroES, plays an essential role in assisting protein folding. The GroEL-GroES system forms a nano-cage that allows encapsulation of the non-native substrate proteins and provides a physical environment optimized to promote and accelerate protein folding. The sequence is that of Chaperonin GroEL 1 from Trichodesmium erythraeum (strain IMS101).